The following is an 80-amino-acid chain: Large ribosomal subunit protein uL24 (80 aa).

It belongs to the universal ribosomal protein uL24 family. In terms of assembly, part of the 50S ribosomal subunit.

Its function is as follows. One of two assembly initiator proteins, it binds directly to the 5'-end of the 23S rRNA, where it nucleates assembly of the 50S subunit. In terms of biological role, one of the proteins that surrounds the polypeptide exit tunnel on the outside of the subunit. This Chlorobaculum parvum (strain DSM 263 / NCIMB 8327) (Chlorobium vibrioforme subsp. thiosulfatophilum) protein is Large ribosomal subunit protein uL24.